The chain runs to 548 residues: Chaperonin GroEL (548 aa).

ATP is bound by residues 29-32 (TLGP), Lys50, 86-90 (DGTTT), Gly414, 478-480 (NAA), and Asp494.

It belongs to the chaperonin (HSP60) family. As to quaternary structure, forms a cylinder of 14 subunits composed of two heptameric rings stacked back-to-back. Interacts with the co-chaperonin GroES.

Its subcellular location is the cytoplasm. It catalyses the reaction ATP + H2O + a folded polypeptide = ADP + phosphate + an unfolded polypeptide.. Functionally, together with its co-chaperonin GroES, plays an essential role in assisting protein folding. The GroEL-GroES system forms a nano-cage that allows encapsulation of the non-native substrate proteins and provides a physical environment optimized to promote and accelerate protein folding. This is Chaperonin GroEL from Psychrobacter sp. (strain PRwf-1).